A 380-amino-acid chain; its full sequence is Zinc finger protein neuro-d4 (380 aa).

The segment at 132 to 164 (ALLDCQKPPPGDFAHDAEGDEMEDDAPRRKNKA) is disordered. The C2H2-type zinc finger occupies 190–213 (YVCDICGKRYKNRPGLSYHYTHTH). PHD-type zinc fingers lie at residues 262–321 (EGPC…CKNC) and 318–368 (CKNC…CLRQ). 16 residues coordinate Zn(2+): C265, C268, C286, C289, H294, C297, C315, C318, C321, C324, C336, C339, H344, C347, C362, and C365.

Belongs to the requiem/DPF family. Component of neuron-specific chromatin remodeling complex (nBAF complex), a subfamily of ATP-dependent SWI/SNF chromatin remodeling complexes.

The protein localises to the cytoplasm. The protein resides in the nucleus. Functionally, may have an important role in developing neurons by participating in regulation of cell survival, possibly as a neurospecific transcription factor. Belongs to the neuron-specific chromatin remodeling complex (nBAF complex) and plays a role in neural development. The protein is Zinc finger protein neuro-d4 of Gallus gallus (Chicken).